We begin with the raw amino-acid sequence, 1024 residues long: Error-prone DNA polymerase (1024 aa).

It belongs to the DNA polymerase type-C family. DnaE2 subfamily.

The protein resides in the cytoplasm. The enzyme catalyses DNA(n) + a 2'-deoxyribonucleoside 5'-triphosphate = DNA(n+1) + diphosphate. Functionally, DNA polymerase involved in damage-induced mutagenesis and translesion synthesis (TLS). It is not the major replicative DNA polymerase. The protein is Error-prone DNA polymerase of Pseudomonas paraeruginosa (strain DSM 24068 / PA7) (Pseudomonas aeruginosa (strain PA7)).